Reading from the N-terminus, the 359-residue chain is Mandelate racemase (359 aa).

The Proton acceptor; specific for S-mandelate role is filled by lysine 166. Residues aspartate 195, glutamate 221, and glutamate 247 each coordinate Mg(2+). Histidine 297 acts as the Proton acceptor; specific for R-mandelate in catalysis. Glutamate 317 provides a ligand contact to substrate.

The protein belongs to the mandelate racemase/muconate lactonizing enzyme family. As to quaternary structure, homooctamer. Mg(2+) serves as cofactor.

It catalyses the reaction (S)-mandelate = (R)-mandelate. Its pathway is aromatic compound metabolism; (R)-mandelate degradation; benzoate from (R)-mandelate: step 1/4. The sequence is that of Mandelate racemase (mdlA) from Pseudomonas putida (Arthrobacter siderocapsulatus).